Reading from the N-terminus, the 559-residue chain is Tissue-type plasminogen activator (559 aa).

An N-terminal signal peptide occupies residues 1-17; sequence MKRELLCVLLLCGLAFP. Residues 18 to 29 constitute a propeptide that is removed on maturation; sequence LPDQGIHGRFRR. Residues 30–32 constitute a propeptide, removed by plasmin; it reads GAR. The Fibronectin type-I domain occupies 36-78; it reads ATCRDEPTQTTYQQHQSWLRPMLRSSRVEYCRCNSGLVQCHSV. Disulfide bonds link cysteine 38/cysteine 68, cysteine 66/cysteine 75, cysteine 83/cysteine 94, cysteine 88/cysteine 105, cysteine 107/cysteine 116, cysteine 124/cysteine 205, cysteine 145/cysteine 187, cysteine 176/cysteine 200, cysteine 213/cysteine 294, cysteine 234/cysteine 276, cysteine 265/cysteine 289, cysteine 297/cysteine 428, cysteine 340/cysteine 356, cysteine 348/cysteine 417, cysteine 442/cysteine 516, cysteine 474/cysteine 490, and cysteine 506/cysteine 534. Residues 39-49 are important for binding to annexin A2; it reads RDEPTQTTYQQ. An EGF-like domain is found at 79–117; sequence PVRSCSEPRCFNGGTCQQALYFSDFVCQCPDGFVGKRCD. 2 Kringle domains span residues 124-205 and 213-294; these read CFEE…TPAC and CYVG…MSPC. N-linked (GlcNAc...) asparagine glycosylation occurs at asparagine 149. In terms of domain architecture, Peptidase S1 spans 309–558; it reads IKGGLYTDIT…YLDWIHDNMK (250 aa). Catalysis depends on charge relay system residues histidine 355 and aspartate 404. A glycan (N-linked (GlcNAc...) asparagine) is linked at asparagine 481. The active-site Charge relay system is serine 510.

The protein belongs to the peptidase S1 family. Heterodimer of chain A and chain B held by a disulfide bond. Binds to fibrin with high affinity. This interaction leads to an increase in the catalytic efficiency of the enzyme due to an increase in affinity for plasminogen. Similarly, binding to heparin increases the activation of plasminogen. Binds to annexin A2, cytokeratin-8, fibronectin and laminin. Binds to mannose receptor and the low-density lipoprotein receptor-related protein (LRP1); these proteins are involved in TPA clearance. Binds LRP1B; binding is followed by internalization and degradation. Forms heterodimer with SERPINA5. Interacts with SERPINE1. In complex with SERPINE1, interacts with SORL1. Post-translationally, the single chain, almost fully active enzyme, can be further processed into a two-chain fully active form by a cleavage after Arg-308 catalyzed by plasmin, tissue kallikrein or factor Xa.

It localises to the secreted. Its subcellular location is the extracellular space. It carries out the reaction Specific cleavage of Arg-|-Val bond in plasminogen to form plasmin.. Inhibited by SERPINA5. Inhibited by SERPINE1. In terms of biological role, converts the abundant, but inactive, zymogen plasminogen to plasmin by hydrolyzing a single Arg-Val bond in plasminogen. By controlling plasmin-mediated proteolysis, it plays an important role in tissue remodeling and degradation, in cell migration and many other physiopathological events. During oocyte activation, plays a role in cortical granule reaction in the zona reaction, which contributes to the block to polyspermy. This chain is Tissue-type plasminogen activator (Plat), found in Mus musculus (Mouse).